Consider the following 677-residue polypeptide: DNA-directed RNA polymerase subunit beta' (677 aa).

Cysteine 69, cysteine 71, cysteine 87, and cysteine 90 together coordinate Zn(2+). Positions 489, 491, and 493 each coordinate Mg(2+).

The protein belongs to the RNA polymerase beta' chain family. RpoC1 subfamily. In terms of assembly, in plastids the minimal PEP RNA polymerase catalytic core is composed of four subunits: alpha, beta, beta', and beta''. When a (nuclear-encoded) sigma factor is associated with the core the holoenzyme is formed, which can initiate transcription. Mg(2+) is required as a cofactor. The cofactor is Zn(2+).

It is found in the plastid. It localises to the chloroplast. The catalysed reaction is RNA(n) + a ribonucleoside 5'-triphosphate = RNA(n+1) + diphosphate. Its function is as follows. DNA-dependent RNA polymerase catalyzes the transcription of DNA into RNA using the four ribonucleoside triphosphates as substrates. In Spinacia oleracea (Spinach), this protein is DNA-directed RNA polymerase subunit beta'.